The primary structure comprises 147 residues: MSTYTPKAGDVTHSWHVIDATDVVLGRLAVQAANLLRGKHKPTYAPHIDGGDFVVIINAEKVAISGNKLQGKNVYHHSGFPGGLKSRTVGEVLDRTPDRLVEKAIVGMLPKTKLGRAMSSKLKVYAGPNHPHTAQQPVPFEIKQVAQ.

It belongs to the universal ribosomal protein uL13 family. In terms of assembly, part of the 50S ribosomal subunit.

Its function is as follows. This protein is one of the early assembly proteins of the 50S ribosomal subunit, although it is not seen to bind rRNA by itself. It is important during the early stages of 50S assembly. The protein is Large ribosomal subunit protein uL13 of Rhodococcus erythropolis (strain PR4 / NBRC 100887).